The chain runs to 185 residues: MTETSFPGWHGTTIIGVKKNGKVVVAGDGQVSLGQTVIKGTARKVRRLTPGGHDVVAGFAGSTADAFTLLERLEAKLEATPGQLQRAAVELAKDWRTDKYLQKLEAMLIVTDGSLLLVITGAGDVLEPEHDIAAIGSGGNFALAAARGLMEADFDAETIARKAMQIAADICVYTNGNLTVEAIDA.

T12 is an active-site residue. Na(+) is bound by residues A168, C171, and T174.

The protein belongs to the peptidase T1B family. HslV subfamily. As to quaternary structure, a double ring-shaped homohexamer of HslV is capped on each side by a ring-shaped HslU homohexamer. The assembly of the HslU/HslV complex is dependent on binding of ATP.

It localises to the cytoplasm. The enzyme catalyses ATP-dependent cleavage of peptide bonds with broad specificity.. With respect to regulation, allosterically activated by HslU binding. Functionally, protease subunit of a proteasome-like degradation complex believed to be a general protein degrading machinery. The chain is ATP-dependent protease subunit HslV from Dinoroseobacter shibae (strain DSM 16493 / NCIMB 14021 / DFL 12).